We begin with the raw amino-acid sequence, 392 residues long: Elongation factor Tu (392 aa).

A tr-type G domain is found at 10–202; it reads KVHVNVGTIG…VLDEYIEDPI (193 aa). The interval 19 to 26 is G1; sequence GHVDHGKT. 19–26 provides a ligand contact to GTP; it reads GHVDHGKT. Mg(2+) is bound at residue threonine 26. The G2 stretch occupies residues 60–64; it reads GITIN. Positions 81–84 are G3; the sequence is DCPG. GTP contacts are provided by residues 81 to 85 and 136 to 139; these read DCPGH and NKCD. The interval 136–139 is G4; the sequence is NKCD. Residues 174-176 form a G5 region; it reads SAL.

The protein belongs to the TRAFAC class translation factor GTPase superfamily. Classic translation factor GTPase family. EF-Tu/EF-1A subfamily. In terms of assembly, monomer.

It localises to the cytoplasm. The enzyme catalyses GTP + H2O = GDP + phosphate + H(+). GTP hydrolase that promotes the GTP-dependent binding of aminoacyl-tRNA to the A-site of ribosomes during protein biosynthesis. This Phytoplasma mali (strain AT) protein is Elongation factor Tu.